A 144-amino-acid polypeptide reads, in one-letter code: Large ribosomal subunit protein uL13 (144 aa).

It belongs to the universal ribosomal protein uL13 family. Part of the 50S ribosomal subunit.

Its function is as follows. This protein is one of the early assembly proteins of the 50S ribosomal subunit, although it is not seen to bind rRNA by itself. It is important during the early stages of 50S assembly. The chain is Large ribosomal subunit protein uL13 from Clostridium acetobutylicum (strain ATCC 824 / DSM 792 / JCM 1419 / IAM 19013 / LMG 5710 / NBRC 13948 / NRRL B-527 / VKM B-1787 / 2291 / W).